Here is a 246-residue protein sequence, read N- to C-terminus: Polyhedrin (246 aa).

This sequence belongs to the polyhedrin family.

Its function is as follows. Major component of the virus occlusion bodies, which are large proteinaceous structures (polyhedra), that protect the virus from the outside environment for extended periods until they are ingested by insect larvae. The protein is Polyhedrin (PH) of Spodoptera exigua nuclear polyhedrosis virus (strain US) (SeMNPV).